Reading from the N-terminus, the 486-residue chain is Probable glucan endo-1,3-beta-glucosidase eglC (486 aa).

A signal peptide spans 1–18 (MQLTQLLALALSLATSEA). Asparagine 84 carries N-linked (GlcNAc...) asparagine glycosylation. Glutamate 128 functions as the Proton donor in the catalytic mechanism. An N-linked (GlcNAc...) asparagine glycan is attached at asparagine 183. Glutamate 239 functions as the Nucleophile in the catalytic mechanism. Asparagine 315, asparagine 386, asparagine 396, and asparagine 404 each carry an N-linked (GlcNAc...) asparagine glycan. The tract at residues 330–458 (AAAGGVAGGS…SSGAASPSST (129 aa)) is disordered. Low complexity-rich tracts occupy residues 341 to 404 (GSAS…HGSN) and 413 to 424 (SVSNVSPSKSSS). Residues 430 to 442 (AATSMGASPSSVG) show a composition bias toward polar residues. Residues 445-458 (GPSKSSGAASPSST) show a composition bias toward low complexity. Glycine 463 carries the GPI-anchor amidated glycine lipid modification. A propeptide spans 464–486 (AATSVSAPVVHVVLLALMMVIAA) (removed in mature form).

The protein belongs to the glycosyl hydrolase 17 family. Post-translationally, the GPI-anchor is attached to the protein in the endoplasmic reticulum and serves to target the protein to the cell surface. There, the glucosamine-inositol phospholipid moiety is cleaved off and the GPI-modified mannoprotein is covalently attached via its lipidless GPI glycan remnant to the 1,6-beta-glucan of the outer cell wall layer.

It localises to the cell membrane. The protein resides in the secreted. Its subcellular location is the cell wall. It catalyses the reaction Hydrolysis of (1-&gt;3)-beta-D-glucosidic linkages in (1-&gt;3)-beta-D-glucans.. Glucanases play a role in cell expansion during growth, in cell-cell fusion during mating, and in spore release during sporulation. This enzyme may be involved in beta-glucan degradation and also function biosynthetically as a transglycosylase. The chain is Probable glucan endo-1,3-beta-glucosidase eglC (eglC) from Aspergillus terreus (strain NIH 2624 / FGSC A1156).